The chain runs to 464 residues: Arginine biosynthesis bifunctional protein ArgJ, mitochondrial (464 aa).

The N-terminal 22 residues, 1–22, are a transit peptide targeting the mitochondrion; that stretch reads MAASFKALPQQLTLTRSFARCY. Thr-193, Lys-222, Thr-233, Glu-320, Asn-459, and Thr-464 together coordinate substrate. Thr-233 acts as the Nucleophile in catalysis.

This sequence belongs to the ArgJ family. As to quaternary structure, heterodimer of an alpha and a beta chain. The alpha and beta chains are autoproteolytically processed from a single precursor protein within the mitochondrion.

Its subcellular location is the mitochondrion matrix. It carries out the reaction N(2)-acetyl-L-ornithine + L-glutamate = N-acetyl-L-glutamate + L-ornithine. The catalysed reaction is L-glutamate + acetyl-CoA = N-acetyl-L-glutamate + CoA + H(+). Its pathway is amino-acid biosynthesis; L-arginine biosynthesis; L-ornithine and N-acetyl-L-glutamate from L-glutamate and N(2)-acetyl-L-ornithine (cyclic): step 1/1. It functions in the pathway amino-acid biosynthesis; L-arginine biosynthesis; N(2)-acetyl-L-ornithine from L-glutamate: step 1/4. Functionally, catalyzes two activities which are involved in the cyclic version of arginine biosynthesis: the synthesis of acetylglutamate from glutamate and acetyl-CoA, and of ornithine by transacetylation between acetylornithine and glutamate. The sequence is that of Arginine biosynthesis bifunctional protein ArgJ, mitochondrial from Verticillium alfalfae (strain VaMs.102 / ATCC MYA-4576 / FGSC 10136) (Verticillium wilt of alfalfa).